We begin with the raw amino-acid sequence, 496 residues long: Fibronectin type III and SPRY domain-containing protein 1 (496 aa).

A coiled-coil region spans residues 4-99; that stretch reads QREALRKIIK…ALESSEELLE (96 aa). The 58-residue stretch at 105 to 162 folds into the COS domain; the sequence is LQAMDSEDFPQAAKQIKDGVTMAPAFRLSLKAKVSDNMSHLMVDFAQERQMLQALKFL. One can recognise a Fibronectin type-III domain in the interval 164–268; sequence VPSAPVIDLA…EPVTLETPAF (105 aa). In terms of domain architecture, B30.2/SPRY spans 268–477; that stretch reads FMFRLDASTS…VTTGLQVPSA (210 aa). Positions 301–336 are disordered; sequence KAREKDGKGRTASPINSPARGTPSPKRMPSGRGGRD. 2 positions are modified to omega-N-methylarginine: Arg310 and Arg320.

Oligomerization is required for binding to microtubules. As to expression, highly expressed in brain tissues, including cerebellum, cerebral cortex, medulla, occipital pole, frontal lobe, temporal lobe and putamen. Lower expression in spinal cord.

It localises to the cytoplasm. The protein localises to the cytoskeleton. Its subcellular location is the microtubule organizing center. It is found in the centrosome. The protein resides in the nucleus. It localises to the cleavage furrow. May be involved in microtubule organization and stabilization. This chain is Fibronectin type III and SPRY domain-containing protein 1 (FSD1), found in Homo sapiens (Human).